Reading from the N-terminus, the 943-residue chain is Protein translocase subunit SecA (943 aa).

Residues Gln-90, 108-112 (GEGKT), and Asp-509 contribute to the ATP site. The disordered stretch occupies residues 534–561 (KPDNEHKPPIPQQRNSKSGGGFSANVDS).

The protein belongs to the SecA family. As to quaternary structure, monomer and homodimer. Part of the essential Sec protein translocation apparatus which comprises SecA, SecYEG and auxiliary proteins SecDF. Other proteins may also be involved.

The protein resides in the cell inner membrane. Its subcellular location is the cellular thylakoid membrane. It is found in the cytoplasm. The enzyme catalyses ATP + H2O + cellular proteinSide 1 = ADP + phosphate + cellular proteinSide 2.. Its function is as follows. Part of the Sec protein translocase complex. Interacts with the SecYEG preprotein conducting channel. Has a central role in coupling the hydrolysis of ATP to the transfer of proteins into and across the cell membrane, serving as an ATP-driven molecular motor driving the stepwise translocation of polypeptide chains across the membrane. Probably participates in protein translocation into and across both the cytoplasmic and thylakoid membranes in cyanobacterial cells. This is Protein translocase subunit SecA from Prochlorococcus marinus subsp. pastoris (strain CCMP1986 / NIES-2087 / MED4).